We begin with the raw amino-acid sequence, 345 residues long: Heat-inducible transcription repressor HrcA (345 aa).

The protein belongs to the HrcA family.

Its function is as follows. Negative regulator of class I heat shock genes (grpE-dnaK-dnaJ and groELS operons). Prevents heat-shock induction of these operons. This chain is Heat-inducible transcription repressor HrcA, found in Corynebacterium diphtheriae (strain ATCC 700971 / NCTC 13129 / Biotype gravis).